Reading from the N-terminus, the 161-residue chain is Putative defense protein 2 (161 aa).

The signal sequence occupies residues 1-11; that stretch reads LSWSALALTSA. Residues 12–161 form the Reelin domain; that stretch reads YPTGAPTSAC…SAPVKILSHH (150 aa). An intrachain disulfide couples Cys-21 to Cys-98. Asn-91 is a glycosylation site (N-linked (GlcNAc...) asparagine).

It belongs to the insect defense protein family.

The protein resides in the secreted. Its function is as follows. May have antimicrobial activity. The protein is Putative defense protein 2 of Antheraea mylitta (Tasar silkworm).